The chain runs to 118 residues: Large ribosomal subunit protein bL20 (118 aa).

This sequence belongs to the bacterial ribosomal protein bL20 family.

Functionally, binds directly to 23S ribosomal RNA and is necessary for the in vitro assembly process of the 50S ribosomal subunit. It is not involved in the protein synthesizing functions of that subunit. This chain is Large ribosomal subunit protein bL20, found in Thermosipho melanesiensis (strain DSM 12029 / CIP 104789 / BI429).